The sequence spans 376 residues: Putative E3 ubiquitin-protein ligase XBAT34 (376 aa).

2 ANK repeats span residues 41–71 (LGRTPLILACTNDDLYDVAKTLLELGSNVNA) and 77–106 (NGGTPLHHAAKRGLVHTVKLLLSHGANPLV). The RING-type zinc finger occupies 325-364 (CVICVDAPSEAVCVPCGHVAGCISCLKEIENKKMGCPVCR).

The catalysed reaction is S-ubiquitinyl-[E2 ubiquitin-conjugating enzyme]-L-cysteine + [acceptor protein]-L-lysine = [E2 ubiquitin-conjugating enzyme]-L-cysteine + N(6)-ubiquitinyl-[acceptor protein]-L-lysine.. It functions in the pathway protein modification; protein ubiquitination. Its function is as follows. No E3 ubiquitin-protein ligase activity observed when associated with the E2 enzyme UBC8 in vitro. The protein is Putative E3 ubiquitin-protein ligase XBAT34 (XBAT34) of Arabidopsis thaliana (Mouse-ear cress).